A 204-amino-acid polypeptide reads, in one-letter code: Somatotropin (204 aa).

The first 17 residues, 1-17 (MDRVVLMLSVMSLGVSS), serve as a signal peptide directing secretion. The residue at position 18 (glutamine 18) is a Pyrrolidone carboxylic acid. Histidine 36 lines the Zn(2+) pocket. An intrachain disulfide couples cysteine 69 to cysteine 177. Glutamate 186 contributes to the Zn(2+) binding site. Cysteines 194 and 202 form a disulfide.

This sequence belongs to the somatotropin/prolactin family.

It localises to the secreted. Growth hormone plays an important role in growth control and is involved in the regulation of several anabolic processes. Implicated as an osmoregulatory substance important for seawater adaptation. This Sparus aurata (Gilthead sea bream) protein is Somatotropin (gh).